Here is a 313-residue protein sequence, read N- to C-terminus: Formate-nitrite transporter (313 aa).

Residues 1-47 (MPKSNTKYVIDPLSVKTSCSSEESYIRCVEYGKSKAHYSSLILLAKA) lie on the Cytoplasmic side of the membrane. Residues 48 to 68 (ILAGVFVGVCAHASGIAGGLF) traverse the membrane as a helical segment. Over 69–77 (YYHKLREYV) the chain is Extracellular. A helical membrane pass occupies residues 78-98 (GASMSAFVYGFTFPIAFLCII). Over 99 to 128 (CTGSDLFTGNTLAVTTALLHGKVSCLEYVR) the chain is Cytoplasmic. Residues 129–149 (VMCISLFGNYVGAVSFAFFVS) form a helical membrane-spanning segment. Topologically, residues 150 to 185 (YGSGAFHKKEQVDKNHIFQFLNDIAVKKVNHTFVEC) are extracellular. An N-linked (GlcNAc...) asparagine glycan is attached at N179. The helical transmembrane segment at 186-206 (ICLAIGCNIFVCLAVYFVLSI) threads the bilayer. At 207–211 (KDGSG) the chain is on the cytoplasmic side. A helical transmembrane segment spans residues 212–232 (MVFSVFFAVYAFAIAGYEHII). Residues 233 to 260 (ANIYTLNISLMIDTEVSFTQVYFKNLLP) lie on the Extracellular side of the membrane. N-linked (GlcNAc...) asparagine glycosylation occurs at N239. The chain crosses the membrane as a helical span at residues 261-281 (TLIGNYIAGALVLACPLFFIY). At 282-313 (RSYYINYEKMNEPSGGSLRSISIEMKNDGGAT) the chain is on the cytoplasmic side.

This sequence belongs to the FNT transporter (TC 1.A.16) family. Homopentamer.

It is found in the cell membrane. The protein resides in the vacuole membrane. The catalysed reaction is (S)-lactate(in) + H(+)(in) = (S)-lactate(out) + H(+)(out). It catalyses the reaction formate(in) + H(+)(in) = formate(out) + H(+)(out). It carries out the reaction pyruvate(out) + H(+)(out) = pyruvate(in) + H(+)(in). The enzyme catalyses acetate(out) + H(+)(out) = acetate(in) + H(+)(in). Its activity is regulated as follows. Inhibited by the Malaria Box compound MMV007839 and its derivatives BH296 and BH267.meta. Its function is as follows. Monocarboxylate-proton symporter that mediates the efflux of the waste product lactate in the intraerythrocytic parasites; active in acidic-to-neutral pH range. Transports L-lactate. This Plasmodium ovale protein is Formate-nitrite transporter.